A 399-amino-acid polypeptide reads, in one-letter code: (R)-2-hydroxy-4-methylpentanoate CoA-transferase (399 aa).

Asp171 serves as the catalytic Nucleophile.

Belongs to the CoA-transferase III family. Homodimer.

The enzyme catalyses 4-methylpentanoyl-CoA + (2R)-hydroxy-4-methylpentanoate = (R)-2-hydroxy-4-methylpentanoyl-CoA + 4-methylpentanoate. It functions in the pathway amino-acid degradation; L-leucine degradation. Involved in the reductive branch of L-leucine fermentation. Catalyzes the transfer of the CoA moiety from 4-methylpentanoyl-CoA (isocaproyl-CoA) to (R)-2-hydroxy-4-methylpentanoate ((R)-2-hydroxyisocaproate), leading to the formation of (R)-2-hydroxy-4-methylpentanoyl-CoA. Other CoA thioesters, such as acetyl-CoA or butyryl-CoA, are not accepted as substrates. This chain is (R)-2-hydroxy-4-methylpentanoate CoA-transferase, found in Clostridioides difficile (Peptoclostridium difficile).